A 179-amino-acid chain; its full sequence is Ribosome maturation factor RimM (179 aa).

In terms of domain architecture, PRC barrel spans 96-179 (DNEFYWVDLI…KITVDWGLDY (84 aa)).

The protein belongs to the RimM family. Binds ribosomal protein uS19.

The protein localises to the cytoplasm. Functionally, an accessory protein needed during the final step in the assembly of 30S ribosomal subunit, possibly for assembly of the head region. Essential for efficient processing of 16S rRNA. May be needed both before and after RbfA during the maturation of 16S rRNA. It has affinity for free ribosomal 30S subunits but not for 70S ribosomes. The polypeptide is Ribosome maturation factor RimM (Janthinobacterium sp. (strain Marseille) (Minibacterium massiliensis)).